The chain runs to 396 residues: Serine/threonine-protein kinase VRK1 (396 aa).

In terms of domain architecture, Protein kinase spans 37–317 (WKVGLPIGQG…LLDYTEKPLY (281 aa)). ATP contacts are provided by residues 43-51 (IGQGGFGCI) and Lys-71. Residue Lys-71 forms a Glycyl lysine isopeptide (Lys-Gly) (interchain with G-Cter in SUMO2) linkage. The Proton acceptor role is filled by Asp-177. Phosphoserine; by PLK3 is present on Ser-342. The tract at residues 354–396 (ITKKRKKEIEESKEPGVEDTEWSNTQTEEAIQTRSRTRKRVQK) is disordered. Phosphothreonine; by autocatalysis is present on Thr-355. Over residues 360–369 (KEIEESKEPG) the composition is skewed to basic and acidic residues. A compositionally biased stretch (polar residues) spans 375 to 387 (WSNTQTEEAIQTR). Ser-376 carries the phosphoserine modification. Thr-378 is subject to Phosphothreonine. Positions 387–393 (RSRTRKR) are required for interaction with the nucleosome.

Belongs to the protein kinase superfamily. CK1 Ser/Thr protein kinase family. VRK subfamily. Interacts with HDAC1, KAT2B, SETDB1, KDM3A and KDM4A. Associates with the nucleosome through interactions with nucleosome DNA, histone H2A and histone H2B; the interaction with H2A and H2B is mediated by the nucleosome acidic patch, a cluster of negatively charged residues of H2A and H2B forming a cleft within the nucleosome core. As to quaternary structure, (Microbial infection) Interacts with vaccinia protein B12; this interaction inhibits the repressive activity of the vaccinia virus B12 pseudokinase on viral replication factory formation. Autophosphorylated at various serine and threonine residues. Autophosphorylation does not impair its ability to phosphorylate p53/TP53. Phosphorylation by PLK3 leads to induction of Golgi fragmentation during mitosis. Widely expressed. Highly expressed in fetal liver, testis and thymus.

The protein localises to the nucleus. It localises to the cytoplasm. The protein resides in the cajal body. The enzyme catalyses L-seryl-[protein] + ATP = O-phospho-L-seryl-[protein] + ADP + H(+). It carries out the reaction L-threonyl-[protein] + ATP = O-phospho-L-threonyl-[protein] + ADP + H(+). Active in presence of Mn(2+), Mg(2+) and Zn(2+), but is not functional with Ca(2+) or Cu(2+). Has a higher affinity for Mn(2+) than for Mg(2+). RAN inhibits its autophosphorylation and its ability to phosphorylate histone H3. Functionally, serine/threonine kinase involved in the regulation of key cellular processes including the cell cycle, nuclear condensation, transcription regulation, and DNA damage response. Controls chromatin organization and remodeling by mediating phosphorylation of histone H3 on 'Thr-4' and histone H2AX (H2aXT4ph). It also phosphorylates KAT5 in response to DNA damage, promoting KAT5 association with chromatin and histone acetyltransferase activity. Is involved in the regulation of cell cycle progression of neural progenitors, and is required for proper cortical neuronal migration. Is involved in neurite elongation and branching in motor neurons, and has an essential role in Cajal bodies assembly, acting through COIL phosphorylation and the control of coilin degradation. Involved in Golgi disassembly during the cell cycle: following phosphorylation by PLK3 during mitosis, it is required to induce Golgi fragmentation. Phosphorylates BANF1: disrupts its ability to bind DNA, reduces its binding to LEM domain-containing proteins and causes its relocalization from the nucleus to the cytoplasm. Phosphorylates TP53BP1 and p53/TP53 on 'Thr-18', preventing the interaction between p53/TP53 and MDM2. Phosphorylates ATF2 which activates its transcriptional activity. Phosphorylates JUN. The sequence is that of Serine/threonine-protein kinase VRK1 from Homo sapiens (Human).